A 226-amino-acid polypeptide reads, in one-letter code: Clarin-3 (226 aa).

Residues 8–28 form a helical membrane-spanning segment; the sequence is LMFLSGFLTSLGSVVVICSIL. N-linked (GlcNAc...) asparagine glycans are attached at residues Asn-46 and Asn-83. Transmembrane regions (helical) follow at residues 92-112, 128-148, and 181-201; these read VVIILLILSLAASLLSSMFTF, GVYTWNGLSASFVFLTMVLFV, and FWLILLVILLNIVTVVIIIFY.

The protein belongs to the clarin family.

Its subcellular location is the membrane. This is Clarin-3 (Clrn3) from Rattus norvegicus (Rat).